The primary structure comprises 401 residues: NALCN channel auxiliary factor 2 (401 aa).

Residues 42-62 (LASLLFFTALLSDHLWLCAGG) traverse the membrane as a helical segment. N-linked (GlcNAc...) asparagine glycosylation is found at Asn-77, Asn-97, Asn-153, and Asn-178. The chain crosses the membrane as a helical span at residues 362 to 382 (LCVLVLFLLHTFISITTLQHC).

This sequence belongs to the NALF family.

It localises to the membrane. Functionally, probable component of the NALCN channel complex, a channel that regulates the resting membrane potential and controls neuronal excitability. This Danio rerio (Zebrafish) protein is NALCN channel auxiliary factor 2 (nalf2).